The sequence spans 124 residues: Small ribosomal subunit protein uS12 (124 aa).

The interval 1–32 (MPTIQQLVRKGRQAKTTKTKTPALKGSPQRRG) is disordered. A compositionally biased stretch (basic residues) spans 9–18 (RKGRQAKTTK). At D89 the chain carries 3-methylthioaspartic acid. Positions 105–124 (QGVRNRKQARSRYGAKKEKS) are disordered. Positions 108-118 (RNRKQARSRYG) are enriched in basic residues.

The protein belongs to the universal ribosomal protein uS12 family. Part of the 30S ribosomal subunit. Contacts proteins S8 and S17. May interact with IF1 in the 30S initiation complex.

Functionally, with S4 and S5 plays an important role in translational accuracy. In terms of biological role, interacts with and stabilizes bases of the 16S rRNA that are involved in tRNA selection in the A site and with the mRNA backbone. Located at the interface of the 30S and 50S subunits, it traverses the body of the 30S subunit contacting proteins on the other side and probably holding the rRNA structure together. The combined cluster of proteins S8, S12 and S17 appears to hold together the shoulder and platform of the 30S subunit. This chain is Small ribosomal subunit protein uS12, found in Salinispora arenicola (strain CNS-205).